A 155-amino-acid chain; its full sequence is Superoxide dismutase [Cu-Zn] (155 aa).

Positions 47, 49, and 64 each coordinate Cu cation. A disulfide bridge connects residues C58 and C147. 4 residues coordinate Zn(2+): H64, H72, H81, and D84. H121 provides a ligand contact to Cu cation. R144 provides a ligand contact to substrate.

The protein belongs to the Cu-Zn superoxide dismutase family. In terms of assembly, homodimer. Requires Cu cation as cofactor. Zn(2+) is required as a cofactor.

It localises to the cytoplasm. The catalysed reaction is 2 superoxide + 2 H(+) = H2O2 + O2. Functionally, destroys radicals which are normally produced within the cells and which are toxic to biological systems. The sequence is that of Superoxide dismutase [Cu-Zn] (SOD1) from Kluyveromyces lactis (strain ATCC 8585 / CBS 2359 / DSM 70799 / NBRC 1267 / NRRL Y-1140 / WM37) (Yeast).